The following is a 143-amino-acid chain: Transcriptional regulator MraZ (143 aa).

2 SpoVT-AbrB domains span residues T5–E47 and A76–A119.

It belongs to the MraZ family. Forms oligomers.

Its subcellular location is the cytoplasm. The protein localises to the nucleoid. In Corynebacterium diphtheriae (strain ATCC 700971 / NCTC 13129 / Biotype gravis), this protein is Transcriptional regulator MraZ.